We begin with the raw amino-acid sequence, 353 residues long: Melatonin receptor type 1A (353 aa).

Residues 1–32 (MKGNVSELLNATQQAPGGGEGGRPRPSWLAST) are Extracellular-facing. N-linked (GlcNAc...) asparagine glycans are attached at residues asparagine 4 and asparagine 10. The chain crosses the membrane as a helical span at residues 33–53 (LAFILIFTIVVDILGNLLVIL). Residues 54 to 66 (SVYRNKKLRNSGN) lie on the Cytoplasmic side of the membrane. Residues 67 to 87 (IFVVSLAVADLVVAVYPYPLV) traverse the membrane as a helical segment. Residues 88-105 (LTSILNNGWNLGYLHCQV) lie on the Extracellular side of the membrane. A disulfide bridge connects residues cysteine 103 and cysteine 180. The helical transmembrane segment at 106-126 (SAFLMGLSVIGSIFNITGIAM) threads the bilayer. The Cytoplasmic segment spans residues 127–145 (NRYCYICHSLKYDKIYSNK). The chain crosses the membrane as a helical span at residues 146 to 166 (NSLCYVFLIWMLTLIAIMPNL). Topologically, residues 167 to 190 (QTGTLQYDPRIYSCTFTQSVSSAY) are extracellular. A helical membrane pass occupies residues 191 to 211 (TIAVVVFHFIVPMIIVIFCYL). Over 212–243 (RIWVLVLQVRRRVKPDNKPKLKPQDFRNFVTM) the chain is Cytoplasmic. Residues 244-264 (FVVFVLFAICWAPLNLIGLIV) form a helical membrane-spanning segment. Residues 265 to 277 (ASDPATMVPRIPE) are Extracellular-facing. The helical transmembrane segment at 278–298 (WLFVASYYLAYFNSCLNAIIY) threads the bilayer. The Cytoplasmic segment spans residues 299-353 (GLLNQNFRKEYKKIIVSLCTAKMFFVESSNEEADKIKCKPSPLIPNNNLIKVDSV).

The protein belongs to the G-protein coupled receptor 1 family.

Its subcellular location is the cell membrane. In terms of biological role, high affinity receptor for melatonin. Likely to mediate the reproductive and circadian actions of melatonin. The activity of this receptor is mediated by pertussis toxin sensitive G proteins that inhibit adenylate cyclase activity. Possibly involved in sleep induction, by melatonin activation of the potassium channel KCNMA1/BK and the dissociation of G-beta and G-gamma subunits, thereby decreasing synaptic transmission. This Mus musculus (Mouse) protein is Melatonin receptor type 1A (Mtnr1a).